We begin with the raw amino-acid sequence, 222 residues long: Probable GTP-binding protein EngB (222 aa).

An EngB-type G domain is found at 23 to 217 (NASEIVFLGR…REEIVKYTLG (195 aa)). Residues 31–38 (GRSNVGKS), 57–61 (GKTQL), 82–85 (DLPG), 152–155 (TKAD), and 191–193 (FSA) contribute to the GTP site. Mg(2+) is bound by residues Ser38 and Thr59.

The protein belongs to the TRAFAC class TrmE-Era-EngA-EngB-Septin-like GTPase superfamily. EngB GTPase family. Requires Mg(2+) as cofactor.

Functionally, necessary for normal cell division and for the maintenance of normal septation. The polypeptide is Probable GTP-binding protein EngB (Helicobacter hepaticus (strain ATCC 51449 / 3B1)).